Here is a 213-residue protein sequence, read N- to C-terminus: TVP38/TMEM64 family membrane protein YtxB (213 aa).

6 consecutive transmembrane segments (helical) span residues 9-29, 34-54, 58-78, 81-101, 159-179, and 181-201; these read WLAV…YLNV, IRVW…GISI, LVLF…GPLL, LYTL…AGLF, AVGI…FLAG, and LPAF…PFIF.

It belongs to the TVP38/TMEM64 family.

The protein resides in the cell membrane. The polypeptide is TVP38/TMEM64 family membrane protein YtxB (ytxB) (Bacillus subtilis (strain 168)).